Consider the following 287-residue polypeptide: Phosphoribosylaminoimidazole-succinocarboxamide synthase (287 aa).

Belongs to the SAICAR synthetase family.

It carries out the reaction 5-amino-1-(5-phospho-D-ribosyl)imidazole-4-carboxylate + L-aspartate + ATP = (2S)-2-[5-amino-1-(5-phospho-beta-D-ribosyl)imidazole-4-carboxamido]succinate + ADP + phosphate + 2 H(+). It functions in the pathway purine metabolism; IMP biosynthesis via de novo pathway; 5-amino-1-(5-phospho-D-ribosyl)imidazole-4-carboxamide from 5-amino-1-(5-phospho-D-ribosyl)imidazole-4-carboxylate: step 1/2. This Neisseria meningitidis serogroup C (strain 053442) protein is Phosphoribosylaminoimidazole-succinocarboxamide synthase.